The primary structure comprises 89 residues: Large ribosomal subunit protein bL27 (89 aa).

Positions 1–21 are disordered; it reads MAHKKSGGSSRNGRDSNPKYL.

Belongs to the bacterial ribosomal protein bL27 family.

This Hyphomonas neptunium (strain ATCC 15444) protein is Large ribosomal subunit protein bL27.